The chain runs to 152 residues: Ferredoxin-thioredoxin reductase catalytic chain, chloroplastic (152 aa).

Residues 1 to 38 constitute a chloroplast transit peptide; sequence MTSTVTTTVGCGGLPVRPLSTATRGRPRRCAVRAQAAG. Cys-91 contributes to the [4Fe-4S] cluster binding site. Residue Cys-93 is the Nucleophile of the active site. Cys-93 and Cys-123 are disulfide-bonded. 3 residues coordinate [4Fe-4S] cluster: Cys-110, Cys-112, and Cys-121.

It belongs to the ferredoxin thioredoxin reductase beta subunit family. As to quaternary structure, heterodimer of subunit A (variable subunit) and subunit B (catalytic subunit). Heterodimeric FTR forms a complex with ferredoxin and thioredoxin. It depends on [4Fe-4S] cluster as a cofactor.

It localises to the plastid. The protein localises to the chloroplast. It catalyses the reaction [thioredoxin]-disulfide + 2 reduced [2Fe-2S]-[ferredoxin] + 2 H(+) = [thioredoxin]-dithiol + 2 oxidized [2Fe-2S]-[ferredoxin]. In terms of biological role, catalytic subunit of the ferredoxin-thioredoxin reductase (FTR), which catalyzes the two-electron reduction of thioredoxins by the electrons provided by reduced ferredoxin. The polypeptide is Ferredoxin-thioredoxin reductase catalytic chain, chloroplastic (FTRC) (Zea mays (Maize)).